Reading from the N-terminus, the 107-residue chain is Anti-adapter protein IraM (107 aa).

It belongs to the IraM/RssC family.

It is found in the cytoplasm. In terms of biological role, inhibits RpoS proteolysis by regulating RssB activity, thereby increasing the stability of the sigma stress factor RpoS during magnesium starvation. The protein is Anti-adapter protein IraM of Shigella sonnei (strain Ss046).